Reading from the N-terminus, the 188-residue chain is Ribosome maturation factor RimP (188 aa).

This sequence belongs to the RimP family.

It is found in the cytoplasm. Its function is as follows. Required for maturation of 30S ribosomal subunits. The chain is Ribosome maturation factor RimP from Erythrobacter litoralis (strain HTCC2594).